The chain runs to 193 residues: Superoxide dismutase [Fe] (193 aa).

Residues His-27, His-75, Asp-159, and His-163 each coordinate Fe cation.

Belongs to the iron/manganese superoxide dismutase family. Homodimer. Fe cation is required as a cofactor.

It carries out the reaction 2 superoxide + 2 H(+) = H2O2 + O2. Functionally, destroys superoxide anion radicals which are normally produced within the cells and which are toxic to biological systems. The polypeptide is Superoxide dismutase [Fe] (sodB) (Bacteroides fragilis (strain YCH46)).